The primary structure comprises 311 residues: Methionyl-tRNA formyltransferase (311 aa).

110–113 (SLLP) lines the (6S)-5,6,7,8-tetrahydrofolate pocket.

Belongs to the Fmt family.

It catalyses the reaction L-methionyl-tRNA(fMet) + (6R)-10-formyltetrahydrofolate = N-formyl-L-methionyl-tRNA(fMet) + (6S)-5,6,7,8-tetrahydrofolate + H(+). Its function is as follows. Attaches a formyl group to the free amino group of methionyl-tRNA(fMet). The formyl group appears to play a dual role in the initiator identity of N-formylmethionyl-tRNA by promoting its recognition by IF2 and preventing the misappropriation of this tRNA by the elongation apparatus. This is Methionyl-tRNA formyltransferase from Streptococcus pneumoniae (strain P1031).